The sequence spans 99 residues: Integration host factor subunit alpha (99 aa).

This sequence belongs to the bacterial histone-like protein family. In terms of assembly, heterodimer of an alpha and a beta chain.

Its function is as follows. This protein is one of the two subunits of integration host factor, a specific DNA-binding protein that functions in genetic recombination as well as in transcriptional and translational control. This is Integration host factor subunit alpha (ihfA) from Mannheimia haemolytica (Pasteurella haemolytica).